Reading from the N-terminus, the 107-residue chain is Heme-degrading monooxygenase (107 aa).

Positions 2-93 (VIVANKTLIR…DYILGNEIEF (92 aa)) constitute an ABM domain. Asn-6 lines the Fe cation pocket. His-76 contacts heme.

It belongs to the antibiotic biosynthesis monooxygenase family. Heme-degrading monooxygenase IsdG subfamily. As to quaternary structure, homodimer.

Its subcellular location is the cytoplasm. It carries out the reaction heme b + 3 reduced [NADPH--hemoprotein reductase] + 3 O2 = biliverdin IXalpha + CO + Fe(2+) + 3 oxidized [NADPH--hemoprotein reductase] + 3 H2O + H(+). Allows bacterial pathogens to use the host heme as an iron source. Catalyzes the oxidative degradation of the heme macrocyclic porphyrin ring to the biliverdin in the presence of a suitable electron donor such as ascorbate or NADPH--cytochrome P450 reductase, with subsequent release of free iron. The protein is Heme-degrading monooxygenase of Shouchella clausii (strain KSM-K16) (Alkalihalobacillus clausii).